Here is a 999-residue protein sequence, read N- to C-terminus: Helicase required for RNAi-mediated heterochromatin assembly 1 (999 aa).

Residues 61-90 (EQIETSETSKTQDSEGNKVDKNLKENKSIR) form a disordered region. Positions 70 to 88 (KTQDSEGNKVDKNLKENKS) are enriched in basic and acidic residues. Ser-94 bears the Phosphoserine mark. Over residues 106 to 124 (RNDITSGKNREFENEHHPA) the composition is skewed to basic and acidic residues. The tract at residues 106 to 131 (RNDITSGKNREFENEHHPASDTSSWR) is disordered. 393-400 (GPPGTGKS) provides a ligand contact to ATP.

Cid12, hrr1 and rdp1 interact forming the RNA-directed RNA polymerase complex (RDRC). The RDRC complex interacts with the RITS complex via interaction between ago1 and hrr1. Clr4 has a role in mediating this interaction.

The protein resides in the cytoplasm. It localises to the nucleus. It carries out the reaction ATP + H2O = ADP + phosphate + H(+). In terms of biological role, has a role in the RNA interference (RNAi) pathway which is important for heterochromatin formation and accurate chromosome segregation. A member of the RNA-directed RNA polymerase complex (RDRC) which is involved in the generation of small interfering RNAs (siRNAs) and mediate their association with the RNA-induced transcriptional silencing (RITS) complex. RITS acts as a priming complex for dsRNA synthesis at the site of non-coding centromeric RNA. The polypeptide is Helicase required for RNAi-mediated heterochromatin assembly 1 (hrr1) (Schizosaccharomyces pombe (strain 972 / ATCC 24843) (Fission yeast)).